A 68-amino-acid chain; its full sequence is Conotoxin Cal14.13c (68 aa).

The first 20 residues, 1–20 (MKLCVVXVLLMLAMPFNGGE), serve as a signal peptide directing secretion. Positions 21–68 (ASRFFNQHARSQRSGMKTRGIWCDPPCPEGETCRGGECSDEFNGDLGG) are excised as a propeptide. Leucine 66 carries the leucine amide modification.

In terms of processing, contains 2 disulfide bonds. In terms of tissue distribution, expressed by the venom duct.

The protein resides in the secreted. In terms of biological role, probable neurotoxin with unknown target. Possibly targets ion channels. The polypeptide is Conotoxin Cal14.13c (Californiconus californicus (California cone)).